We begin with the raw amino-acid sequence, 202 residues long: Histone chaperone ASF1B (202 aa).

The tract at residues 1–155 (MAKVSVLNVA…VTRFHINWDN (155 aa)) is interaction with CHAF1B. Residues 1 to 156 (MAKVSVLNVA…TRFHINWDNN (156 aa)) form an interaction with histone H3 region. Ser198 is modified (phosphoserine; by TLK2).

This sequence belongs to the ASF1 family. As to quaternary structure, interacts with histone H3 (via C-terminus), including histone H3.1, H3.2 and H3.3, and histone H4; the interaction with H3 is direct. Interacts with the CHAF1A, CHAF1B and RBBP4 subunits of the CAF-1 complex. Interacts with HAT1, NASP and TAF1. Found in a soluble complex with NASP and histones H3 and H4; the interaction with NASP is probably indirect and mediated by H3-H4. Interacts with CDAN1. Found in a cytosolic complex with IPO4 and histones H3 and H4. Interacts with CREBBP. Phosphorylated by TLK1 and TLK2. In terms of tissue distribution, highly expressed in testis and at lower levels in colon, small intestine and thymus.

It is found in the nucleus. It localises to the cytoplasm. The protein resides in the cytosol. Its function is as follows. Histone chaperone that facilitates histone deposition and histone exchange and removal during nucleosome assembly and disassembly. Cooperates with chromatin assembly factor 1 (CAF-1) to promote replication-dependent chromatin assembly. Also involved in the nuclear import of the histone H3-H4 dimer together with importin-4 (IPO4): specifically recognizes and binds newly synthesized histones with the monomethylation of H3 'Lys-9' (H3K9me1) and diacetylation at 'Lys-5' and 'Lys-12' of H4 (H4K5K12ac) marks in the cytosol. Does not participate in replication-independent nucleosome deposition which is mediated by ASF1A and HIRA. Required for gonad development. In Homo sapiens (Human), this protein is Histone chaperone ASF1B.